Reading from the N-terminus, the 156-residue chain is Small ribosomal subunit protein uS7 (156 aa).

Belongs to the universal ribosomal protein uS7 family. Part of the 30S ribosomal subunit. Contacts proteins S9 and S11.

Functionally, one of the primary rRNA binding proteins, it binds directly to 16S rRNA where it nucleates assembly of the head domain of the 30S subunit. Is located at the subunit interface close to the decoding center, probably blocks exit of the E-site tRNA. This chain is Small ribosomal subunit protein uS7, found in Oleidesulfovibrio alaskensis (strain ATCC BAA-1058 / DSM 17464 / G20) (Desulfovibrio alaskensis).